We begin with the raw amino-acid sequence, 249 residues long: uncharacterized protein (249 aa).

2 stretches are compositionally biased toward polar residues: residues Asn66–Pro79 and Ala92–Glu119. The interval Asn66 to Gly142 is disordered.

It localises to the plastid. It is found in the chloroplast. This is an uncharacterized protein from Chlorella vulgaris (Green alga).